The chain runs to 920 residues: Valine--tRNA ligase (920 aa).

Positions Pro40–His50 match the 'HIGH' region motif. The short motif at Lys522–Ser526 is the 'KMSKS' region element. Lys525 serves as a coordination point for ATP. 2 coiled-coil regions span residues Glu642 to Ala668 and Ala849 to Leu920.

Belongs to the class-I aminoacyl-tRNA synthetase family. ValS type 1 subfamily. In terms of assembly, monomer.

It is found in the cytoplasm. The catalysed reaction is tRNA(Val) + L-valine + ATP = L-valyl-tRNA(Val) + AMP + diphosphate. Its function is as follows. Catalyzes the attachment of valine to tRNA(Val). As ValRS can inadvertently accommodate and process structurally similar amino acids such as threonine, to avoid such errors, it has a 'posttransfer' editing activity that hydrolyzes mischarged Thr-tRNA(Val) in a tRNA-dependent manner. The sequence is that of Valine--tRNA ligase from Coxiella burnetii (strain RSA 493 / Nine Mile phase I).